A 314-amino-acid chain; its full sequence is Ribosomal protein L11 methyltransferase (314 aa).

The S-adenosyl-L-methionine site is built by Thr-161, Gly-182, Asp-204, and Asn-248.

It belongs to the methyltransferase superfamily. PrmA family.

Its subcellular location is the cytoplasm. The enzyme catalyses L-lysyl-[protein] + 3 S-adenosyl-L-methionine = N(6),N(6),N(6)-trimethyl-L-lysyl-[protein] + 3 S-adenosyl-L-homocysteine + 3 H(+). Its function is as follows. Methylates ribosomal protein L11. The chain is Ribosomal protein L11 methyltransferase from Listeria welshimeri serovar 6b (strain ATCC 35897 / DSM 20650 / CCUG 15529 / CIP 8149 / NCTC 11857 / SLCC 5334 / V8).